Consider the following 359-residue polypeptide: Probable 2-oxoacid dependent dioxygenase (359 aa).

The Fe2OG dioxygenase domain maps to 207 to 308 (KGLWMLCHCF…ISVACFFVHT (102 aa)). Fe cation-binding residues include His231, Asp233, and His287. A disordered region spans residues 329 to 359 (PPKYRDTTSESSNHYVARKPNGNSSLDHLRI). Residues 349–359 (NGNSSLDHLRI) show a composition bias toward polar residues.

It belongs to the iron/ascorbate-dependent oxidoreductase family. Fe(2+) is required as a cofactor. In terms of tissue distribution, expressed in leaves and seeds. All cultivars with seed-only-functional allele have low to non-detectable GSL-OH expression in the leaves.

It carries out the reaction gluconapin + AH2 + O2 = progoitrin + A + H2O. Necessary for the hydroxylation of but-3-enyl glucosinolate to 2-hydroxybut-3-enyl glucosinolate, which is toxic to insects, bacteria and nematodes, inhibits seed germination and produces bitter flavors. The protein is Probable 2-oxoacid dependent dioxygenase of Arabidopsis thaliana (Mouse-ear cress).